The chain runs to 393 residues: Major outer membrane porin, serovar E (393 aa).

Residues Met-1–Ala-22 form the signal peptide.

It belongs to the chlamydial porin (CP) (TC 1.B.2) family. Part of a disulfide cross-linked outer membrane complex (COMC) composed of the major outer membrane porin (MOMP), the small cysteine-rich protein (OmcA) and the large cysteine-rich periplasmic protein (OmcB).

It localises to the cell outer membrane. In elementary bodies (EBs, the infectious stage, which is able to survive outside the host cell) provides the structural integrity of the outer envelope through disulfide cross-links with the small cysteine-rich protein and the large cysteine-rich periplasmic protein. It has been described in publications as the Sarkosyl-insoluble COMC (Chlamydia outer membrane complex), and serves as the functional equivalent of peptidoglycan. In terms of biological role, permits diffusion of specific solutes through the outer membrane. The protein is Major outer membrane porin, serovar E (ompA) of Chlamydia trachomatis.